We begin with the raw amino-acid sequence, 173 residues long: Gonadotropin inhibitory hormone peptides (173 aa).

Residues 1-26 form the signal peptide; it reads MEIISTQKFILLTLATVAFLTPHGAC. Positions 27–82 are excised as a propeptide; the sequence is LDELMKSSLESREDDDDKYYETKDSILEEKQRSLNFEEMKDWGSKNFMKVNTPTVN. F95 carries the phenylalanine amide modification. Positions 98–103 are excised as a propeptide; that stretch reads SNPEER. F115 is subject to Phenylalanine amide. Positions 118–140 are excised as a propeptide; that stretch reads AFGESLSRRAPNLSNRSGRSPLA. F154 bears the Phenylalanine amide mark. The propeptide occupies 157-173; sequence SVPISLSQGVQESEPGM.

The protein belongs to the FARP (FMRFamide related peptide) family. Specifically expressed in the diencephalon.

It is found in the secreted. Hypothalamic factor, responsible for the negative regulation of gonadotropin secretion. The sequence is that of Gonadotropin inhibitory hormone peptides (GNIH) from Coturnix japonica (Japanese quail).